A 59-amino-acid chain; its full sequence is Large ribosomal subunit protein uL30 (59 aa).

It belongs to the universal ribosomal protein uL30 family. Part of the 50S ribosomal subunit.

This chain is Large ribosomal subunit protein uL30, found in Clostridium botulinum (strain 657 / Type Ba4).